The primary structure comprises 415 residues: Serine hydroxymethyltransferase (415 aa).

Residues Leu-122 and 126-128 (GHL) each bind (6S)-5,6,7,8-tetrahydrofolate. Lys-230 carries the post-translational modification N6-(pyridoxal phosphate)lysine.

This sequence belongs to the SHMT family. In terms of assembly, homodimer. Requires pyridoxal 5'-phosphate as cofactor.

It is found in the cytoplasm. The enzyme catalyses (6R)-5,10-methylene-5,6,7,8-tetrahydrofolate + glycine + H2O = (6S)-5,6,7,8-tetrahydrofolate + L-serine. It functions in the pathway one-carbon metabolism; tetrahydrofolate interconversion. It participates in amino-acid biosynthesis; glycine biosynthesis; glycine from L-serine: step 1/1. Its function is as follows. Catalyzes the reversible interconversion of serine and glycine with tetrahydrofolate (THF) serving as the one-carbon carrier. This reaction serves as the major source of one-carbon groups required for the biosynthesis of purines, thymidylate, methionine, and other important biomolecules. Also exhibits THF-independent aldolase activity toward beta-hydroxyamino acids, producing glycine and aldehydes, via a retro-aldol mechanism. This Leptothrix cholodnii (strain ATCC 51168 / LMG 8142 / SP-6) (Leptothrix discophora (strain SP-6)) protein is Serine hydroxymethyltransferase.